The following is a 358-amino-acid chain: Pyruvate dehydrogenase E1 component subunit alpha (358 aa).

Heterodimer of an alpha and a beta chain. Thiamine diphosphate serves as cofactor.

The enzyme catalyses N(6)-[(R)-lipoyl]-L-lysyl-[protein] + pyruvate + H(+) = N(6)-[(R)-S(8)-acetyldihydrolipoyl]-L-lysyl-[protein] + CO2. In terms of biological role, the pyruvate dehydrogenase complex catalyzes the overall conversion of pyruvate to acetyl-CoA and CO(2). It contains multiple copies of three enzymatic components: pyruvate dehydrogenase (E1), dihydrolipoamide acetyltransferase (E2) and lipoamide dehydrogenase (E3). This Mycoplasma pneumoniae (strain ATCC 29342 / M129 / Subtype 1) (Mycoplasmoides pneumoniae) protein is Pyruvate dehydrogenase E1 component subunit alpha (pdhA).